The primary structure comprises 115 residues: Photosystem II reaction center Psb28 protein (115 aa).

This sequence belongs to the Psb28 family. As to quaternary structure, part of the photosystem II complex.

Its subcellular location is the plastid. It localises to the chloroplast thylakoid membrane. The polypeptide is Photosystem II reaction center Psb28 protein (Trieres chinensis (Marine centric diatom)).